The chain runs to 293 residues: 16S rRNA (guanine(1405)-N(7))-methyltransferase (293 aa).

Residues Phe-47, 80–82 (HAS), Arg-86, Ala-111, Asp-134, 160–161 (DL), Leu-176, and Gln-185 each bind S-adenosyl-L-methionine. The span at 258–274 (GRPAPAEGAAEPGATRP) shows a compositional bias: low complexity. Residues 258–293 (GRPAPAEGAAEPGATRPVVDVPATARPDADRVDPTG) form a disordered region. Residues 284–293 (PDADRVDPTG) show a composition bias toward basic and acidic residues.

The protein belongs to the methyltransferase superfamily. Aminoglycoside resistance family.

It catalyses the reaction guanosine(1405) in 16S rRNA + S-adenosyl-L-methionine = N(7)-methylguanosine(1405) in 16S rRNA + S-adenosyl-L-homocysteine. Functionally, specifically methylates the N(7) position of guanine 1405 in 16S rRNA. Confers resistance to aminoglycosides. This is 16S rRNA (guanine(1405)-N(7))-methyltransferase (fmrO) from Micromonospora olivasterospora.